A 438-amino-acid polypeptide reads, in one-letter code: Keratin, type I cytoskeletal 13 (438 aa).

The interval 1-95 (MSCRFQSSSM…SVDGGLLSGN (95 aa)) is head. Omega-N-methylarginine is present on residues arginine 27 and arginine 35. The tract at residues 96–131 (EKITMQNLNDRLASYLEKVRALEAANADLEVKIRDW) is coil. The IF rod domain occupies 96 to 408 (EKITMQNLND…SLLEGQDAKM (313 aa)). A linker 1 region spans residues 132–150 (HLKQSPTSPERDYSAYYKT). The tract at residues 151–242 (IEELRIKILE…KNHEEEMKEF (92 aa)) is coil 1B. The tract at residues 243 to 265 (SNQAVGQVNVEMDATPGIDLTRV) is linker 12. A coil 2 region spans residues 266-404 (LAEMREQYEA…ATYRSLLEGQ (139 aa)). Residues 405-438 (DAKMTGFNTGGNSTTTSNTSTSPSTSGRPDFRKY) form a tail region. A disordered region spans residues 408 to 438 (MTGFNTGGNSTTTSNTSTSPSTSGRPDFRKY). Over residues 409–431 (TGFNTGGNSTTTSNTSTSPSTSG) the composition is skewed to low complexity.

This sequence belongs to the intermediate filament family. In terms of assembly, heterotetramer of two type I and two type II keratins. In terms of processing, O-glycosylated; glycans consist of single N-acetylglucosamine residues.

Functionally, type 1 keratin. Maintains postnatal tongue mucosal cell homeostasis and tissue organization in response to mechanical stress, potentially via regulation of the G1/S phase cyclins CCNE1 and CCNE2. The protein is Keratin, type I cytoskeletal 13 of Rattus norvegicus (Rat).